Reading from the N-terminus, the 322-residue chain is Transcription factor IIIA (322 aa).

9 C2H2-type zinc fingers span residues 12–36 (FVCSFLNCKASFSKAWKLEAHYCKH), 42–64 (FACDRCDKTFCTRCQLTRHNLSH), 70–95 (YQCLEDGCSESFISTAGLKNHVERVH), 102–126 (YVCDYEGCAKEFRKKKQLRSHKCEH), 132–156 (FECQYEGCGKKYTTSKKLQKHEKVH), 159–184 (YPCAEEGCDFQGRMWTEYQAHRKAAH), 188–211 (LQCDSCAKVFHKAWFLKKHKLFVH), 218–243 (FKCTKEGCQKTYTTHFNLQNHILSFH), and 249–273 (FICPHDGCGKAFAMEGSLKRHAVVH). The disordered stretch occupies residues 272–322 (VHDPQKKKLQKKTKRGRKKKLEPKTNVSDDSELPAQLHGLSLNTSTSQNNP). Basic residues predominate over residues 278–292 (KKLQKKTKRGRKKKL). A compositionally biased stretch (polar residues) spans 312–322 (SLNTSTSQNNP).

It is found in the nucleus. Its function is as follows. Involved in ribosomal large subunit biogenesis. Interacts with the internal control region (ICR) of approximately 50 bases within the 5S RNA genes, is required for correct transcription of these genes by RNA polymerase III. Also binds the transcribed 5S RNA's. This Ictalurus punctatus (Channel catfish) protein is Transcription factor IIIA (gtf3a).